The sequence spans 233 residues: MEAPAPSLTEEDLTEVKKDALENLRVYLCEKIIAERHFDHLRAKKILSREDTEEISCRTSSRKRAGKLLDYLQENPRGLDTLVESIRREKTQSFLIQKITDEVLKLRNIKLEHLKGLKCSSCEPFAAGATNNLSRCNSDESNLSEKQRASTVMYHPEGESSTAPFFSMASSLNLPVLEVGRTENSSFSSATLPRPGDPGAPPLPPDLRLEEGGSCGNSSEMFLPLRSRALSRQ.

Methionine 1 carries the post-translational modification N-acetylmethionine. The 89-residue stretch at 13 to 101 folds into the CARD domain; it reads LTEVKKDALE…QSFLIQKITD (89 aa). Residues lysine 17, lysine 31, and lysine 63 each participate in a glycyl lysine isopeptide (Lys-Gly) (interchain with G-Cter in ubiquitin) cross-link. A Phosphoserine modification is found at serine 138. The tract at residues 185–233 is disordered; it reads SSFSSATLPRPGDPGAPPLPPDLRLEEGGSCGNSSEMFLPLRSRALSRQ. Over residues 195 to 205 the composition is skewed to pro residues; sequence PGDPGAPPLPP.

In terms of assembly, homomultimer; homooligomerized following recruitment by CARD domain-containing proteins that form a nucleating helical template that recruits BCL10 via CARD-CARD interaction. Self-associates by CARD-CARD interaction and interacts with other CARD-proteins such as CARD9, CARD10, CARD11 and CARD14. Forms a complex with CARD14 and MALT1; resulting in the formation of a CBM (CARD14-BCL10-MALT1) complex. Forms a complex with CARD11 and MALT1; resulting in the formation of a CBM (CARD11-BCL10-MALT1) complex. Forms a complex with CARD9 and MALT1; resulting in the formation of a CBM (CARD9-BCL10-MALT1) complex. Found in a membrane raft complex, at least composed of BCL10, CARD11, DPP4 and IKBKB. Binds caspase-9 with its C-terminal domain. Interacts with TRAF2 and BIRC2/c-IAP2. Interacts with PELI2 and SOCS3; these interactions may be mutually exclusive. Post-translationally, phosphorylated by IKBKB/IKKB. Ubiquitinated via both 'Lys-63'-linked and linear ('Met-1'-linked) polyubiquitin chains in response to T-cell receptor (TCR) activation. Ubiquitination is recognized by IKBKG/NEMO, the regulatory subunit of I-kappa-B kinase (IKK), and is required for TCR-induced NF-kappa-B activation. Linear ubiquitination at Lys-17, Lys-31 and Lys-63 is mediated by RNF31/HOIP; linear ubiquitination is recognized with much higher affinity than 'Lys-63'-linked ubiquitin by IKBKG/NEMO. CARD11 is required for linear ubiquitination by HOIP by promoting the targeting of BCL10 to RNF31/HOIP. In terms of processing, proteolytically cleaved by MALT1; required for T-cell activation. In terms of tissue distribution, highly expressed in heart, brain, spleen, lung, liver, skeletal muscle, kidney and testis. Detected in developing brain, olfactory epithelium, tongue, whisker follicles, salivary gland, heart, lung, liver and intestinal epithelia of stage 15 embryos.

It localises to the cytoplasm. It is found in the membrane raft. Its function is as follows. Plays a key role in both adaptive and innate immune signaling by bridging CARD domain-containing proteins to immune activation. Acts by channeling adaptive and innate immune signaling downstream of CARD domain-containing proteins CARD9, CARD11 and CARD14 to activate NF-kappa-B and MAP kinase p38 (MAPK11, MAPK12, MAPK13 and/or MAPK14) pathways which stimulate expression of genes encoding pro-inflammatory cytokines and chemokines. Recruited by activated CARD domain-containing proteins: homooligomerized CARD domain-containing proteins form a nucleating helical template that recruits BCL10 via CARD-CARD interaction, thereby promoting polymerization of BCL10, subsequent recruitment of MALT1 and formation of a CBM complex. This leads to activation of NF-kappa-B and MAP kinase p38 (MAPK11, MAPK12, MAPK13 and/or MAPK14) pathways which stimulate expression of genes encoding pro-inflammatory cytokines and chemokines. Activated by CARD9 downstream of C-type lectin receptors; CARD9-mediated signals are essential for antifungal immunity. Activated by CARD11 downstream of T-cell receptor (TCR) and B-cell receptor (BCR). Promotes apoptosis, pro-caspase-9 maturation and activation of NF-kappa-B via NIK and IKK. The protein is B-cell lymphoma/leukemia 10 (Bcl10) of Mus musculus (Mouse).